The sequence spans 348 residues: Histone PARylation factor 1 (348 aa).

Over residues 1-10 the composition is skewed to basic residues; that stretch reads MAGRGKRKPR. Positions 1-38 are disordered; that stretch reads MAGRGKRKPRSLPQTETPNGEVKKAKEGLKDDKTSVGE. Over residues 21–38 the composition is skewed to basic and acidic residues; sequence EVKKAKEGLKDDKTSVGE. Residues 170–200 are a coiled coil; the sequence is LQKKKKEKRQQKDDAALNRLEEDLKREAERL. E285 (proton donor) is an active-site residue.

This sequence belongs to the HPF1 family. In terms of assembly, interacts with PARP1 (via the PARP catalytic domain). Interacts with PARP2 (via the PARP catalytic domain). Interacts with core nucleosomes in a parp1- and parp2-dependent manner. In adult, mainly expressed in gonads.

Its subcellular location is the chromosome. It localises to the nucleus. Its function is as follows. Cofactor for serine ADP-ribosylation that confers serine specificity on parp1 and parp2 and plays a key role in DNA damage response. Initiates the repair of double-strand DNA breaks: recruited to DNA damage sites by parp1 and parp2 and switches the amino acid specificity of parp1 and parp2 from aspartate or glutamate to serine residues, licensing serine ADP-ribosylation of target proteins. Serine ADP-ribosylation of target proteins, such as histones, promotes decompaction of chromatin and the recruitment of repair factors leading to the reparation of DNA strand breaks. Serine ADP-ribosylation of proteins constitutes the primary form of ADP-ribosylation of proteins in response to DNA damage. Hpf1 acts by completing the active site of parp1 and parp2: forms a composite active site composed of residues from Hpf1 and parp1 or parp2. While hpf1 promotes the initiation of serine ADP-ribosylation, it restricts the polymerase activity of parp1 and parp2 in order to limit the length of poly-ADP-ribose chains. Hpf1 also promotes tyrosine ADP-ribosylation, probably by conferring tyrosine specificity on parp1. This chain is Histone PARylation factor 1, found in Danio rerio (Zebrafish).